A 258-amino-acid polypeptide reads, in one-letter code: Transmembrane O-methyltransferase homolog (258 aa).

S-adenosyl-L-methionine-binding positions include E104, 106-107 (GT), S112, E130, and S160.

This sequence belongs to the class I-like SAM-binding methyltransferase superfamily. Cation-dependent O-methyltransferase family. In terms of assembly, interacts with LHFPL5, PCDH15, TMC1, TMC2 and TMIE. Interacts directly with TMC1. The interaction of TOMT with TMC1 and TMC2 is required for the transportation of TMC1/2 into the stereocilia of hair cells.

The protein localises to the cytoplasm. The protein resides in the endoplasmic reticulum. The enzyme catalyses a catechol + S-adenosyl-L-methionine = a guaiacol + S-adenosyl-L-homocysteine + H(+). Its function is as follows. Catalyzes the O-methylation, and thereby the inactivation, of catecholamine neurotransmitters and catechol hormones. Required for auditory function. Component of the cochlear hair cell's mechanotransduction (MET) machinery. Involved in the assembly of the asymmetric tip-link MET complex. Required for transportation of TMC1 and TMC2 proteins into the mechanically sensitive stereocilia of the hair cells. The function in MET is independent of the enzymatic activity. The protein is Transmembrane O-methyltransferase homolog of Rattus norvegicus (Rat).